The following is a 971-amino-acid chain: Translation initiation factor IF-2 (971 aa).

Residues 49–63 (HLRKSHGATDGDKRK) are compositionally biased toward basic and acidic residues. 2 disordered regions span residues 49–85 (HLRK…KART) and 99–386 (RDDV…PTEP). A compositionally biased stretch (low complexity) spans 105-114 (GAEQGQAQVA). The segment covering 121–181 (ELKRREEEAR…EEEAAAKRAA (61 aa)) has biased composition (basic and acidic residues). Residues 182 to 200 (AEAAAAQQAAAQQAAAEQE) show a composition bias toward low complexity. Basic and acidic residues predominate over residues 209 to 260 (DEARAAAERAAQREAAKKAEDAAREAADKARAEQEEISKRRAAAEAEARAIR). Positions 303–325 (ARPAVKKPAGAAAPATTQAPAGA) are enriched in low complexity. Positions 355-368 (SSGGVDRGWRGGPK) are enriched in gly residues. Residues 471-640 (PRPPVVTVMG…LLQAEVLELK (170 aa)) enclose the tr-type G domain. Positions 480 to 487 (GHVDHGKT) are G1. 480–487 (GHVDHGKT) provides a ligand contact to GTP. The segment at 505 to 509 (GITQH) is G2. Residues 526-529 (DTPG) are G3. Residues 526–530 (DTPGH) and 580–583 (NKID) contribute to the GTP site. Positions 580-583 (NKID) are G4. Positions 616-618 (SAK) are G5.

This sequence belongs to the TRAFAC class translation factor GTPase superfamily. Classic translation factor GTPase family. IF-2 subfamily.

It is found in the cytoplasm. Functionally, one of the essential components for the initiation of protein synthesis. Protects formylmethionyl-tRNA from spontaneous hydrolysis and promotes its binding to the 30S ribosomal subunits. Also involved in the hydrolysis of GTP during the formation of the 70S ribosomal complex. The chain is Translation initiation factor IF-2 from Burkholderia cenocepacia (strain ATCC BAA-245 / DSM 16553 / LMG 16656 / NCTC 13227 / J2315 / CF5610) (Burkholderia cepacia (strain J2315)).